A 99-amino-acid chain; its full sequence is Nucleoid-associated protein LL0120 (99 aa).

The protein belongs to the YbaB/EbfC family. In terms of assembly, homodimer.

It is found in the cytoplasm. Its subcellular location is the nucleoid. Binds to DNA and alters its conformation. May be involved in regulation of gene expression, nucleoid organization and DNA protection. This is Nucleoid-associated protein LL0120 (ybcG) from Lactococcus lactis subsp. lactis (strain IL1403) (Streptococcus lactis).